A 504-amino-acid polypeptide reads, in one-letter code: L-carnitine/gamma-butyrobetaine antiporter (504 aa).

12 consecutive transmembrane segments (helical) span residues 8 to 28 (AGIEPKVFFPPLIIVGILCWL), 51 to 71 (WGWAFEWYMVIMFGGWFWLVF), 92 to 112 (IFMMFASCTSAAVLFWGSIEI), 143 to 163 (GPLPWATYSFLSVAFAYFFFV), 195 to 215 (FYLVALILAMGTSLGLATPLV), 231 to 251 (LDAIIISCWILLNAICVAFGL), 263 to 283 (TYLSFLMLGWVFIVGGASFIV), 315 to 335 (AWTVFYWAWWVIYAIQMSIFL), 347 to 367 (LCLGMVSGLTAGTWLIWTYSG), 403 to 423 (LSTATMWGFFILCFIATVTLI), 446 to 466 (LLVRIGWSVLVGIIGIILLAL), and 475 to 495 (AIIAGGCPLFFVNIMVTLSFI).

This sequence belongs to the BCCT transporter (TC 2.A.15) family. CaiT subfamily. As to quaternary structure, homotrimer.

It localises to the cell inner membrane. It catalyses the reaction 4-(trimethylamino)butanoate(in) + (R)-carnitine(out) = 4-(trimethylamino)butanoate(out) + (R)-carnitine(in). It participates in amine and polyamine metabolism; carnitine metabolism. Catalyzes the exchange of L-carnitine for gamma-butyrobetaine. This Proteus sp. (strain LE138) protein is L-carnitine/gamma-butyrobetaine antiporter.